The following is a 124-amino-acid chain: MFGGGGGLNPRKMKQMMNQMGIDLEEIDAEEVVIRTADEELVFDDAEVQLMDAQGQQTYQVVGEPESRERGDSGSEDDSETESGGEFSEDDVEIVAQRAGVSESTARETLEETGDLAAAVQKLE.

One can recognise an NAC-A/B domain in the interval Gly7 to Gly74. Residues Ala53 to Glu124 form a disordered region. A compositionally biased stretch (acidic residues) spans Gly74 to Glu93.

Belongs to the NAC-alpha family. In terms of assembly, homodimer. Interacts with the ribosome. Binds ribosomal RNA.

In terms of biological role, contacts the emerging nascent chain on the ribosome. This chain is Nascent polypeptide-associated complex protein, found in Natronomonas pharaonis (strain ATCC 35678 / DSM 2160 / CIP 103997 / JCM 8858 / NBRC 14720 / NCIMB 2260 / Gabara) (Halobacterium pharaonis).